Here is a 290-residue protein sequence, read N- to C-terminus: Shikimate dehydrogenase (NADP(+)) (290 aa).

Shikimate is bound by residues Ser-24–Ser-26 and Thr-71. Lys-75 (proton acceptor) is an active-site residue. Shikimate-binding residues include Asn-96 and Asp-111. Residues Gly-136–Ala-140, Asn-160–Arg-165, and Leu-233 contribute to the NADP(+) site. Position 235 (Tyr-235) interacts with shikimate. Gly-256 contributes to the NADP(+) binding site.

The protein belongs to the shikimate dehydrogenase family. Homodimer.

The catalysed reaction is shikimate + NADP(+) = 3-dehydroshikimate + NADPH + H(+). It functions in the pathway metabolic intermediate biosynthesis; chorismate biosynthesis; chorismate from D-erythrose 4-phosphate and phosphoenolpyruvate: step 4/7. Involved in the biosynthesis of the chorismate, which leads to the biosynthesis of aromatic amino acids. Catalyzes the reversible NADPH linked reduction of 3-dehydroshikimate (DHSA) to yield shikimate (SA). The sequence is that of Shikimate dehydrogenase (NADP(+)) from Methanopyrus kandleri (strain AV19 / DSM 6324 / JCM 9639 / NBRC 100938).